The sequence spans 133 residues: ATP synthase epsilon chain, chloroplastic (133 aa).

The protein belongs to the ATPase epsilon chain family. F-type ATPases have 2 components, CF(1) - the catalytic core - and CF(0) - the membrane proton channel. CF(1) has five subunits: alpha(3), beta(3), gamma(1), delta(1), epsilon(1). CF(0) has three main subunits: a, b and c.

It is found in the plastid. The protein localises to the chloroplast thylakoid membrane. In terms of biological role, produces ATP from ADP in the presence of a proton gradient across the membrane. In Ipomoea batatas (Sweet potato), this protein is ATP synthase epsilon chain, chloroplastic.